The primary structure comprises 138 residues: ATP synthase epsilon chain (138 aa).

The protein belongs to the ATPase epsilon chain family. In terms of assembly, F-type ATPases have 2 components, CF(1) - the catalytic core - and CF(0) - the membrane proton channel. CF(1) has five subunits: alpha(3), beta(3), gamma(1), delta(1), epsilon(1). CF(0) has three main subunits: a, b and c.

It localises to the cell membrane. Its function is as follows. Produces ATP from ADP in the presence of a proton gradient across the membrane. The chain is ATP synthase epsilon chain from Streptococcus pyogenes serotype M2 (strain MGAS10270).